A 294-amino-acid chain; its full sequence is N-acetylmuramic acid 6-phosphate etherase (294 aa).

The SIS domain maps to 54–217 (VISSFQNGGR…STASMIGIGK (164 aa)). The Proton donor role is filled by Glu-82. Residue Glu-113 is part of the active site.

The protein belongs to the GCKR-like family. MurNAc-6-P etherase subfamily. In terms of assembly, homodimer.

The enzyme catalyses N-acetyl-D-muramate 6-phosphate + H2O = N-acetyl-D-glucosamine 6-phosphate + (R)-lactate. The protein operates within amino-sugar metabolism; N-acetylmuramate degradation. In terms of biological role, specifically catalyzes the cleavage of the D-lactyl ether substituent of MurNAc 6-phosphate, producing GlcNAc 6-phosphate and D-lactate. The chain is N-acetylmuramic acid 6-phosphate etherase from Bacillus cytotoxicus (strain DSM 22905 / CIP 110041 / 391-98 / NVH 391-98).